We begin with the raw amino-acid sequence, 1506 residues long: Condensin-2 complex subunit D3 (1506 aa).

The tract at residues 154-194 (SNLTQKRKKDHSKSSKDNYRKSRKRGKPPRKEDYQVDELSR) is disordered. HEAT repeat units follow at residues 442-476 (HKFF…LELS), 532-567 (PGER…LKHC), and 574-605 (QDLL…VMAQ). Position 562 is a phosphoserine (Ser-562). Positions 884–897 (SDHLPSSQGTTDAL) are enriched in polar residues. The interval 884 to 908 (SDHLPSSQGTTDALDSQPPFQPRSS) is disordered. The HEAT 4 repeat unit spans residues 968 to 1004 (TVMVDNYIPNISVCLKDSDPFIRKQTLVLLTNLLQEE). Residues 1213-1270 (ALRELMNYLREVMQDYRDEINDFFAVDKQLASELEYDMKKYNEQLAQEQALTEHANAT) adopt a coiled-coil conformation. Positions 1317–1353 (QDNADVPPTQSRPSAPRSNFTPTLPPISENGPLKIMS) are disordered. A compositionally biased stretch (polar residues) spans 1324 to 1338 (PTQSRPSAPRSNFTP). Residues Ser-1359, Ser-1368, Ser-1381, and Ser-1393 each carry the phosphoserine modification. Disordered stretches follow at residues 1385–1412 (LPFN…ESDR) and 1473–1506 (PQSP…KTAN). Low complexity predominate over residues 1393-1405 (SPENPSSHESSLS). The span at 1492–1506 (SSRRSLRKAPLKTAN) shows a compositional bias: basic residues.

In terms of assembly, component of the condensin-2 complex, which contains the SMC2 and SMC4 heterodimer, and 3 non SMC subunits that probably regulate the complex: NCAPH2, NCAPD3 and NCAPG2.

The protein resides in the nucleus. In terms of biological role, regulatory subunit of the condensin-2 complex, a complex which establishes mitotic chromosome architecture and is involved in physical rigidity of the chromatid axis. May promote the resolution of double-strand DNA catenanes (intertwines) between sister chromatids. Condensin-mediated compaction likely increases tension in catenated sister chromatids, providing directionality for type II topoisomerase-mediated strand exchanges toward chromatid decatenation. Specifically required for decatenation of centromeric ultrafine DNA bridges during anaphase. Early in neurogenesis, may play an essential role to ensure accurate mitotic chromosome condensation in neuron stem cells, ultimately affecting neuron pool and cortex size. This is Condensin-2 complex subunit D3 (Ncapd3) from Mus musculus (Mouse).